The primary structure comprises 1476 residues: Coiled-coil domain-containing protein 88B (1476 aa).

A coiled-coil region spans residues 253–481 (SHHLALQLAN…RGLLQVLQGQ (229 aa)). 4 disordered regions span residues 427–451 (QRSL…SLQD), 509–706 (VAFD…EGAL), 825–866 (RRQW…ERRE), and 1323–1476 (LMRP…SLSQ). Ser-436 bears the Phosphoserine mark. Residues 572-586 (SDWSPQESGSPVETQ) show a composition bias toward polar residues. Ser-596 is modified (phosphoserine). Basic and acidic residues-rich tracts occupy residues 678 to 690 (EARE…EGTV), 825 to 834 (RRQWEREGSR), and 842 to 866 (AEER…ERRE). Residues 720-1303 (LASGVAEQEA…KIMDQYRVLE (584 aa)) adopt a coiled-coil conformation. Phosphoserine occurs at positions 1348 and 1379. Residues 1448 to 1469 (LQEHETDANREGPEVQEPEKRP) are compositionally biased toward basic and acidic residues.

This sequence belongs to the CCDC88 family. Homodimer. Interacts with DOCK8. Interacts (via C-terminus) with intact microtubules. Interacts with dynein-dynactin motor complex. Interacts (via C-terminus) with HSPA5. As to expression, expressed in endothelium (at protein level). Expressed in NK cells (at protein level).

It is found in the membrane. Its subcellular location is the cytoplasm. The protein resides in the cytoskeleton. It localises to the microtubule organizing center. The protein localises to the endoplasmic reticulum. It is found in the golgi apparatus. Its function is as follows. Acts as a positive regulator of T-cell maturation and inflammatory function. Required for several functions of T-cells, in both the CD4(+) and the CD8(+) compartments and this includes expression of cell surface markers of activation, proliferation, and cytokine production in response to specific or non-specific stimulation. Enhances NK cell cytotoxicity by positively regulating polarization of microtubule-organizing center (MTOC) to cytotoxic synapse, lytic granule transport along microtubules, and dynein-mediated clustering to MTOC. Interacts with HSPA5 and stabilizes the interaction between HSPA5 and ERN1, leading to suppression of ERN1-induced JNK activation and endoplasmic reticulum stress-induced apoptosis. This Homo sapiens (Human) protein is Coiled-coil domain-containing protein 88B (CCDC88B).